The primary structure comprises 229 residues: Cytochrome c oxidase subunit 2 (229 aa).

Topologically, residues 1 to 14 (MANPSQFGFQDASS) are mitochondrial intermembrane. Residues 15–45 (PIMEELVEFHDHALMVALAICSLVLYLLALM) form a helical membrane-spanning segment. At 46–58 (LVEKLSSNTVDAQ) the chain is on the mitochondrial matrix side. A helical membrane pass occupies residues 59-86 (EVELIWTILPAIVLILLALPSLQILYMM). Topologically, residues 87-229 (DEIDEPDLTL…SWSSLLSTDS (143 aa)) are mitochondrial intermembrane. Cu cation is bound by residues H160, C195, E197, C199, H203, and M206. Mg(2+) is bound at residue E197.

This sequence belongs to the cytochrome c oxidase subunit 2 family. In terms of assembly, component of the cytochrome c oxidase (complex IV, CIV), a multisubunit enzyme composed of 14 subunits. The complex is composed of a catalytic core of 3 subunits MT-CO1, MT-CO2 and MT-CO3, encoded in the mitochondrial DNA, and 11 supernumerary subunits COX4I, COX5A, COX5B, COX6A, COX6B, COX6C, COX7A, COX7B, COX7C, COX8 and NDUFA4, which are encoded in the nuclear genome. The complex exists as a monomer or a dimer and forms supercomplexes (SCs) in the inner mitochondrial membrane with NADH-ubiquinone oxidoreductase (complex I, CI) and ubiquinol-cytochrome c oxidoreductase (cytochrome b-c1 complex, complex III, CIII), resulting in different assemblies (supercomplex SCI(1)III(2)IV(1) and megacomplex MCI(2)III(2)IV(2)). Found in a complex with TMEM177, COA6, COX18, COX20, SCO1 and SCO2. Interacts with TMEM177 in a COX20-dependent manner. Interacts with COX20. Interacts with COX16. It depends on Cu cation as a cofactor.

It is found in the mitochondrion inner membrane. It catalyses the reaction 4 Fe(II)-[cytochrome c] + O2 + 8 H(+)(in) = 4 Fe(III)-[cytochrome c] + 2 H2O + 4 H(+)(out). Component of the cytochrome c oxidase, the last enzyme in the mitochondrial electron transport chain which drives oxidative phosphorylation. The respiratory chain contains 3 multisubunit complexes succinate dehydrogenase (complex II, CII), ubiquinol-cytochrome c oxidoreductase (cytochrome b-c1 complex, complex III, CIII) and cytochrome c oxidase (complex IV, CIV), that cooperate to transfer electrons derived from NADH and succinate to molecular oxygen, creating an electrochemical gradient over the inner membrane that drives transmembrane transport and the ATP synthase. Cytochrome c oxidase is the component of the respiratory chain that catalyzes the reduction of oxygen to water. Electrons originating from reduced cytochrome c in the intermembrane space (IMS) are transferred via the dinuclear copper A center (CU(A)) of subunit 2 and heme A of subunit 1 to the active site in subunit 1, a binuclear center (BNC) formed by heme A3 and copper B (CU(B)). The BNC reduces molecular oxygen to 2 water molecules using 4 electrons from cytochrome c in the IMS and 4 protons from the mitochondrial matrix. The polypeptide is Cytochrome c oxidase subunit 2 (MT-CO2) (Struthio camelus (Common ostrich)).